The primary structure comprises 548 residues: Ran-binding protein 9 (548 aa).

The interval 1-23 (MSSPPLHGLSSVGHLSRDPPPRS) is disordered. Residues 2–189 (SSPPLHGLSS…VDANFGQSPF (188 aa)) enclose the B30.2/SPRY domain. A LisH domain is found at 217–249 (WQSMIQRMVSSYLVHHGYCSTAEAFAKSTDQTV). Residues 255–312 (SIKNRQRIQKLVLSGRMGEAIETTQQLYPSLLERNPNLLFTLKVRQFIEMVNGTDSEV) form the CTLH domain.

The protein belongs to the RANBP9/10 family. Identified in the CTLH complex that contains at least MAEA, RMND5A (or alternatively its paralog RMND5B), GID8, WDR26, and RANBP9 and/or RANBP10.

It localises to the cytoplasm. The protein resides in the cell membrane. It is found in the nucleus. Functionally, may act as scaffolding protein, and as adapter protein to couple membrane receptors to intracellular signaling pathways. Acts as a mediator of cell spreading and actin cytoskeleton rearrangement. Core component of the CTLH E3 ubiquitin-protein ligase complex that mediates ubiquitination and subsequent proteasomal degradation of target proteins. This Xenopus laevis (African clawed frog) protein is Ran-binding protein 9 (ranbp9).